The following is a 179-amino-acid chain: Transcription initiation factor TFIID subunit 10 (179 aa).

A disordered region spans residues 1-23 (MNDPEQYEPSSSTESVLMPPPAL).

Belongs to the TAF10 family. In terms of assembly, component of the TFIID basal transcription factor complex, composed of TATA-box-binding protein tbp-1, and a number of TBP-associated factors (TAFs).

It is found in the nucleus. Functionally, the TFIID basal transcription factor complex plays a major role in the initiation of RNA polymerase II (Pol II)-dependent transcription. TFIID recognizes and binds promoters via its subunit tbp-1, a TATA-box-binding protein, and promotes assembly of the pre-initiation complex (PIC). The TFIID complex consists of tbp-1 and TBP-associated factors (TAFs), including taf-10. Essential for early embryonic development, but not required for transcription of some genes; probably acts via activating transcription initiation by RNA Pol II, as part of the TFIID complex. This is Transcription initiation factor TFIID subunit 10 from Caenorhabditis elegans.